Here is a 138-residue protein sequence, read N- to C-terminus: ATP synthase epsilon chain (138 aa).

This sequence belongs to the ATPase epsilon chain family. F-type ATPases have 2 components, CF(1) - the catalytic core - and CF(0) - the membrane proton channel. CF(1) has five subunits: alpha(3), beta(3), gamma(1), delta(1), epsilon(1). CF(0) has three main subunits: a, b and c.

Its subcellular location is the cell membrane. Its function is as follows. Produces ATP from ADP in the presence of a proton gradient across the membrane. The chain is ATP synthase epsilon chain from Streptococcus pyogenes serotype M3 (strain ATCC BAA-595 / MGAS315).